The chain runs to 575 residues: Proline--tRNA ligase, cytoplasmic (575 aa).

This sequence belongs to the class-II aminoacyl-tRNA synthetase family.

Its subcellular location is the cytoplasm. The catalysed reaction is tRNA(Pro) + L-proline + ATP = L-prolyl-tRNA(Pro) + AMP + diphosphate. The protein is Proline--tRNA ligase, cytoplasmic (PRS) of Candida albicans (Yeast).